We begin with the raw amino-acid sequence, 142 residues long: Hemoglobin subunit alpha-A (142 aa).

Residues 2–142 (VLSANDKTNV…VGNVLTAKYR (141 aa)) form the Globin domain. Position 59 (histidine 59) interacts with O2. Histidine 88 serves as a coordination point for heme b.

It belongs to the globin family. As to quaternary structure, heterotetramer of two alpha chains and two beta chains. As to expression, red blood cells.

Functionally, involved in oxygen transport from the lung to the various peripheral tissues. This is Hemoglobin subunit alpha-A (HBAA) from Accipiter gentilis (Northern goshawk).